The chain runs to 394 residues: uncharacterized protein (394 aa).

2 positions are modified to phosphoserine: S117 and S121. Disordered regions lie at residues 177–295 (DSDE…PGTF), 315–347 (KRSI…GSLS), and 370–394 (SSEV…AHRV). Acidic residues predominate over residues 178-190 (SDEEDEVDDEEIE). 2 stretches are compositionally biased toward polar residues: residues 191-207 (SFNS…NSRY) and 216-230 (EKQS…VSQI). 2 stretches are compositionally biased toward acidic residues: residues 231 to 263 (SDDE…DDED) and 284 to 295 (IPDDTDFVPGTF). Residues 370–379 (SSEVLRNSKS) show a composition bias toward polar residues. S379 is subject to Phosphoserine.

The protein resides in the nucleus. This is an uncharacterized protein from Schizosaccharomyces pombe (strain 972 / ATCC 24843) (Fission yeast).